Consider the following 455-residue polypeptide: MNCEVKHALHCAVLVAWIVCFAYFCGVFTEPVEGSVPESPVASYGLIWTVCLYLLRFTALLVLPQCLCNLGGLMMFNAFREKVQLKAAPLLSPFVCFRVVTKGNFPLLVKENIDTNMKTCFEAGMENFIFEVVTDKAINLPPNPRVREVVVPTVYKTKSGAKFKARALQYCLEDDVNILQPTDWIVHLDEETLLTTNAICGILNFCEDGKHQFGQGVITYANGDIVNWLTTLSDSFRVADDMGKLRFQFKLFHKPLFGWKGSYVVTQVEAERDVSYDHGMEGSIAEDCFFSMVAMKHGYSFDFIEGEMHEKSPFTMWDFLQQRKRWLQGILLTVHSSKIAVVHKALLALSLYAWATMPLTSLQVFLCPLFPLPRCLPFDFLLSFVGALNLYMYIFGVVKSFSHKYRNSLLRLAMYLAGALMTIPFNILIENAAVLVGMFGRKDQFYIVNKDIQTV.

This sequence belongs to the glycosyltransferase 2 family. As to expression, endothelial cells.

The protein resides in the cytoplasm. It participates in protein modification; protein glycosylation. In terms of biological role, glycosyltransferase with a proposed role in glycosphingolipid biosynthesis. Involved in susceptibility to pore-forming crystal toxins in conjunction with bre-1, bre-2, bre-4 and bre-5. Involved in resistance to the nematotoxic C.cinerea galectin Cgl2. Has a role in determining brood size. This chain is Beta-1,4-mannosyltransferase bre-3 (bre-3), found in Caenorhabditis elegans.